Consider the following 927-residue polypeptide: Perchlorate reductase subunit alpha (927 aa).

The segment at residues 1 to 31 (MVQMTRRGFLLASGATLLGSSLSFRTLAAAA) is a signal peptide (tat-type signal). A 4Fe-4S Mo/W bis-MGD-type domain is found at 53-116 (DKKTRGAHLI…CAHDYMYGPH (64 aa)). Residues histidine 60, cysteine 64, cysteine 68, and cysteine 102 each contribute to the [4Fe-4S] cluster site. Aspartate 198 serves as a coordination point for Mo-bis(molybdopterin guanine dinucleotide).

The protein belongs to the prokaryotic molybdopterin-containing oxidoreductase family. Heterotrimer of alpha, beta and gamma subunits. [4Fe-4S] cluster serves as cofactor. Requires Mo-bis(molybdopterin guanine dinucleotide) as cofactor. In terms of processing, predicted to be exported by the Tat system. The position of the signal peptide cleavage has not been experimentally proven.

Its subcellular location is the periplasm. Functionally, component of the perchlorate reductase that catalyzes the reduction of perchlorate to chlorite and allows anaerobic growth on perchlorate as the sole electron acceptor. Is probably also able to reduce chlorate to chlorite. The alpha subunit is likely the catalytic subunit. The protein is Perchlorate reductase subunit alpha (pcrA) of Dechloromonas aromatica (strain RCB).